The primary structure comprises 532 residues: Cyclin-L1 (532 aa).

Cyclin-like stretches follow at residues 94–196 (ELIQ…RVLK) and 209–293 (KIIV…ETLR). Phosphothreonine is present on T331. Residues 332–532 (PALSTLGGFS…SRSGHGRHRR (201 aa)) form a disordered region. S341 and S344 each carry phosphoserine. Glycyl lysine isopeptide (Lys-Gly) (interchain with G-Cter in SUMO2) cross-links involve residues K345 and K353. The segment covering 348 to 358 (SPREVKAEEKS) has biased composition (basic and acidic residues). S358 and S361 each carry phosphoserine. A compositionally biased stretch (basic and acidic residues) spans 367–376 (VKKEPEDRQQ). K368 is covalently cross-linked (Glycyl lysine isopeptide (Lys-Gly) (interchain with G-Cter in SUMO2)). S380 is modified (phosphoserine). Basic residues-rich tracts occupy residues 388–424 (DSKR…RRSR), 444–458 (RRHH…KAKH), 466–482 (SNRH…RSQS), and 492–504 (KKHR…HRDR). The segment at 396 to 438 (RSASRSRSRTRSRSRSHSPRRHYNNRRSRSGTYSSRSRSRSRS) is RS. S451 carries the phosphoserine modification. Basic and acidic residues predominate over residues 505–514 (RERSRSFERS). A compositionally biased stretch (basic residues) spans 515-532 (HKGKHHGGSRSGHGRHRR).

The protein belongs to the cyclin family. Cyclin L subfamily. In terms of assembly, interacts with POLR2A via its hyperphosphorylated C-terminal domain (CTD). Interacts with CDK11A, CDK11B, CDK12 and CDK13. May form a ternary complex with CDK11B and casein kinase II (CKII). Interacts with pre-mRNA-splicing factors, including at least SRSF1, SRSF2 and SRSF7/SLU7. In terms of tissue distribution, widely expressed (at protein level).

It is found in the nucleus speckle. The protein localises to the nucleus. The protein resides in the nucleoplasm. Its subcellular location is the cytoplasm. Functionally, involved in pre-mRNA splicing. Functions in association with cyclin-dependent kinases (CDKs). May play a role in the regulation of RNA polymerase II (pol II). Inhibited by the CDK-specific inhibitor CDKN1A/p21. This Mus musculus (Mouse) protein is Cyclin-L1 (Ccnl1).